We begin with the raw amino-acid sequence, 888 residues long: Extra-large guanine nucleotide-binding protein 1 (888 aa).

The interval 98–119 is disordered; sequence SVIEHTEEEEEEEGGDGEDCEL. Residues 103–118 show a composition bias toward acidic residues; it reads TEEEEEEEGGDGEDCE. Positions 205–222 match the Nuclear localization signal motif; sequence RRVRVVPVKKQPQTKGKK. The segment at 225–268 adopts an RING-type; degenerate zinc-finger fold; it reads CYRCFKGSRFTEKEVCLVCDAKYCNSCVLRAMGSMPEGRKCVTC. In terms of domain architecture, G-alpha spans 482–879; the sequence is TLQKILLVGN…NICMSEYSMY (398 aa). The G1 motif stretch occupies residues 485-498; the sequence is KILLVGNSGSGTST. GTP contacts are provided by residues 490–498 and 661–669; these read GNSGSGTST and DILYAEGVT. Ca(2+)-binding residues include Ser-497 and Thr-669. Residues 661–669 are G2 motif; that stretch reads DILYAEGVT. A G3 motif region spans residues 702 to 711; it reads YQLIRVPSRG. The tract at residues 770 to 777 is G4 motif; the sequence is LLILNKYD. 774–777 contributes to the GTP binding site; it reads NKYD. The segment at 843-848 is G5 motif; that stretch reads SKSLDP.

This sequence belongs to the G-alpha family. XLG subfamily. It depends on Ca(2+) as a cofactor. As to expression, ubiquitous. Strongly expressed in vascular tissues, root and shoot meristems and lateral root primordia.

Its subcellular location is the nucleus. Its function is as follows. Guanine nucleotide-binding proteins (G proteins) are involved as modulators or transducers in various transmembrane signaling systems. Binds GTP with specificity. Plays a role in the root morphogenesis by regulation of the cell proliferation. The polypeptide is Extra-large guanine nucleotide-binding protein 1 (XLG1) (Arabidopsis thaliana (Mouse-ear cress)).